The primary structure comprises 1010 residues: Retinoblastoma-related protein 1 (1010 aa).

The segment at 1-23 (MEGAAPPASSGSEVTGAGSGKVD) is disordered. Residues 419–619 (TPVSTAMTTA…EKGSSMYNSL (201 aa)) are domain A. The interval 419-861 (TPVSTAMTTA…NEVFIPTVKP (443 aa)) is pocket. The interval 620–730 (IVARPTLSAE…PAAGGELCAE (111 aa)) is spacer. The disordered stretch occupies residues 657–679 (LPPLPFQKQEHSPDKDEVRSPKR). Residues 664-679 (KQEHSPDKDEVRSPKR) show a composition bias toward basic and acidic residues. Residues 731-861 (TGIGVFLSKI…NEVFIPTVKP (131 aa)) are domain B. The interval 868–898 (SGTSPNKKNEEKCAADGPYPESPRLSRFPNL) is disordered.

This sequence belongs to the retinoblastoma protein (RB) family.

It is found in the nucleus. Its function is as follows. Regulator of biological processes that recruits a histone deacetylase to control gene transcription. May play a role in the entry into mitosis, negatively regulating the cell proliferation. Formation of stable complexes with geminiviridae replication-associated proteins may create a cellular environment which favors viral DNA replication. The sequence is that of Retinoblastoma-related protein 1 (RBR1) from Oryza sativa subsp. japonica (Rice).